Here is a 711-residue protein sequence, read N- to C-terminus: Protein mono-ADP-ribosyltransferase PARP12 (711 aa).

3 consecutive C3H1-type zinc fingers follow at residues 103-128 (LCKFLIYGNCKFLKTGKNCRNGHNLK), 164-188 (ICLHYNKGDGPFGSCSFQKQCIKLH), and 189-211 (ICQYFLQGECKFGTSCKRSHEFT). The tract at residues 247–279 (SALSKVSPSPAGPQGSSERKDSSGPVSPGTPSQ) is disordered. At Ser-268 the chain carries Phosphoserine. 2 consecutive C3H1-type zinc fingers follow at residues 280–307 (EESEQICLYHIRKSCSFQEKCHRVHFHL) and 281–306 (ESEQICLYHIRKSCSFQEKCHRVHFH). WWE domains lie at 308 to 371 (PYRW…RLST) and 374 to 468 (SVTK…KVCR). At Cys-484 the chain carries ADP-ribosylcysteine. One can recognise a PARP catalytic domain in the interval 494-708 (IPDYWDPAAL…IFVALGNLFT (215 aa)). ADP-ribosyl aspartic acid occurs at positions 610 and 621.

It belongs to the ARTD/PARP family. In terms of assembly, interacts with PARP11; this interaction plays a key role in zika virus suppression. Interacts with ISG15. Auto-mono-ADP-ribosylated. Post-translationally, phosphorylated by PRKD1.

Its subcellular location is the nucleus. It is found in the golgi apparatus. It localises to the trans-Golgi network. The protein resides in the cytoplasm. The protein localises to the stress granule. It catalyses the reaction L-aspartyl-[protein] + NAD(+) = 4-O-(ADP-D-ribosyl)-L-aspartyl-[protein] + nicotinamide. It carries out the reaction L-cysteinyl-[protein] + NAD(+) = S-(ADP-D-ribosyl)-L-cysteinyl-[protein] + nicotinamide + H(+). Mono-ADP-ribosyltransferase that mediates mono-ADP-ribosylation of target proteins. Displays anti-alphavirus activity during IFN-gamma immune activation by directly ADP-ribosylating the alphaviral non-structural proteins nsP3 and nsP4. Acts as a component of the PRKD1-driven regulatory cascade that selectively controls a major branch of the basolateral transport pathway by catalyzing the MARylation of GOLGA1. Acts also as a key regulator of mitochondrial function, protein translation, and inflammation. Inhibits PINK1/Parkin-dependent mitophagy and promotes cartilage degeneration by inhibiting the ubiquitination and SUMOylation of MFN1/2 by upregulating ISG15 and ISGylation. This is Protein mono-ADP-ribosyltransferase PARP12 from Mus musculus (Mouse).